A 209-amino-acid polypeptide reads, in one-letter code: Uracil phosphoribosyltransferase (209 aa).

5-phospho-alpha-D-ribose 1-diphosphate is bound by residues Arg-79, Arg-104, and 131 to 139 (DPMLATGNS). Residues Ile-194 and 199-201 (GDA) each bind uracil. Asp-200 contacts 5-phospho-alpha-D-ribose 1-diphosphate.

Belongs to the UPRTase family. Mg(2+) is required as a cofactor.

The catalysed reaction is UMP + diphosphate = 5-phospho-alpha-D-ribose 1-diphosphate + uracil. Its pathway is pyrimidine metabolism; UMP biosynthesis via salvage pathway; UMP from uracil: step 1/1. Allosterically activated by GTP. In terms of biological role, catalyzes the conversion of uracil and 5-phospho-alpha-D-ribose 1-diphosphate (PRPP) to UMP and diphosphate. The sequence is that of Uracil phosphoribosyltransferase from Variovorax paradoxus (strain S110).